Reading from the N-terminus, the 200-residue chain is V-set and transmembrane domain-containing protein 5 (200 aa).

The signal sequence occupies residues 1 to 28; sequence MRPLPSGRRKTRGISLGLFALCLAAARC. Topologically, residues 29 to 147 are extracellular; sequence LQSQGVSLYI…VSEILYEDLH (119 aa). In terms of domain architecture, Ig-like C2-type spans 37 to 139; it reads YIPQATINAT…QFGTIVLHVS (103 aa). N-linked (GlcNAc...) asparagine glycosylation occurs at asparagine 102. Residues 148-168 traverse the membrane as a helical segment; that stretch reads FVAVILAFLAAVAAVLISLMW. Topologically, residues 169-200 are cytoplasmic; it reads VCNKCAYKFQRKRRHKLKESTTEEIELEDVEC. The interval 170–186 is important for CDC42-dependent filopodia induction; it reads CNKCAYKFQRKRRHKLK.

Can homooligomerize through cis interactions within the same cell membrane. In terms of processing, N-glycosylated.

The protein resides in the cell membrane. Its subcellular location is the cell projection. The protein localises to the dendrite. It is found in the axon. Cell adhesion-like membrane protein of the central nervous system (CNS) which modulates both the position and complexity of central neurons by altering their membrane morphology and dynamics. Involved in the formation of neuronal dendrites and protrusions including dendritic filopodia. In synaptogenesis, regulates synapse formation by altering dendritic spine morphology and actin distribution. Promotes formation of unstable neuronal spines such as thin and branched types. Regulates neuronal morphogenesis and migration during cortical development in the brain. The polypeptide is V-set and transmembrane domain-containing protein 5 (VSTM5) (Homo sapiens (Human)).